The sequence spans 394 residues: Small ribosomal subunit protein mS79 (rPPR3b) (394 aa).

Residues 1–24 (MSSLSRFLLRGNFSFSTHTNRRFF) constitute a mitochondrion transit peptide. PPR repeat units lie at residues 105 to 139 (KEGF…NCKR), 140 to 170 (TALS…LPGK), 176 to 210 (DVAS…GLKP), 211 to 245 (DHIT…NVKR), 246 to 280 (DIRS…ELKP), 281 to 315 (DVFT…GCRP), 316 to 350 (LKFV…RLLV), and 351 to 385 (DEAV…DYLQ).

This sequence belongs to the PPR family. P subfamily. Component of the mitochondrial ribosome small subunit.

The protein localises to the mitochondrion. This Arabidopsis thaliana (Mouse-ear cress) protein is Small ribosomal subunit protein mS79 (rPPR3b).